The primary structure comprises 157 residues: S-ribosylhomocysteine lyase (157 aa).

Residues H54, H58, and C126 each coordinate Fe cation.

This sequence belongs to the LuxS family. Homodimer. Fe cation is required as a cofactor.

It catalyses the reaction S-(5-deoxy-D-ribos-5-yl)-L-homocysteine = (S)-4,5-dihydroxypentane-2,3-dione + L-homocysteine. Involved in the synthesis of autoinducer 2 (AI-2) which is secreted by bacteria and is used to communicate both the cell density and the metabolic potential of the environment. The regulation of gene expression in response to changes in cell density is called quorum sensing. Catalyzes the transformation of S-ribosylhomocysteine (RHC) to homocysteine (HC) and 4,5-dihydroxy-2,3-pentadione (DPD). The chain is S-ribosylhomocysteine lyase from Bacillus cytotoxicus (strain DSM 22905 / CIP 110041 / 391-98 / NVH 391-98).